We begin with the raw amino-acid sequence, 249 residues long: Triosephosphate isomerase (249 aa).

Substrate-binding residues include Asn-12 and Lys-14. Lys-14 carries the N6-acetyllysine modification. Tyr-68 carries the 3'-nitrotyrosine modification. Ser-80 bears the Phosphoserine mark. His-96 functions as the Electrophile in the catalytic mechanism. A Phosphoserine modification is found at Ser-106. Residue Lys-142 forms a Glycyl lysine isopeptide (Lys-Gly) (interchain with G-Cter in SUMO1) linkage. Lys-149 is modified (N6-succinyllysine). At Lys-156 the chain carries N6-acetyllysine; alternate. N6-succinyllysine; alternate is present on Lys-156. Position 159 is a phosphoserine (Ser-159). The active-site Proton acceptor is the Glu-166. Thr-173 carries the phosphothreonine modification. At Lys-194 the chain carries N6-acetyllysine; alternate. Lys-194 is modified (N6-succinyllysine; alternate). The residue at position 194 (Lys-194) is an N6-methyllysine; alternate. A Phosphoserine modification is found at Ser-198. Position 209 is a 3'-nitrotyrosine (Tyr-209). Ser-212 is subject to Phosphoserine. A Phosphothreonine modification is found at Thr-214. Phosphoserine is present on Ser-223. N6-acetyllysine is present on Lys-238.

Belongs to the triosephosphate isomerase family. As to quaternary structure, homodimer.

Its subcellular location is the cytoplasm. It carries out the reaction dihydroxyacetone phosphate = methylglyoxal + phosphate. It catalyses the reaction D-glyceraldehyde 3-phosphate = dihydroxyacetone phosphate. It functions in the pathway carbohydrate degradation; glycolysis; D-glyceraldehyde 3-phosphate from glycerone phosphate: step 1/1. The protein operates within carbohydrate biosynthesis; gluconeogenesis. Triosephosphate isomerase is an extremely efficient metabolic enzyme that catalyzes the interconversion between dihydroxyacetone phosphate (DHAP) and D-glyceraldehyde-3-phosphate (G3P) in glycolysis and gluconeogenesis. In terms of biological role, it is also responsible for the non-negligible production of methylglyoxal a reactive cytotoxic side-product that modifies and can alter proteins, DNA and lipids. The chain is Triosephosphate isomerase (TPI1) from Gorilla gorilla gorilla (Western lowland gorilla).